The sequence spans 89 residues: Large ribosomal subunit protein bL27 (89 aa).

A disordered region spans residues M1 to R20.

It belongs to the bacterial ribosomal protein bL27 family.

This is Large ribosomal subunit protein bL27 from Rhodopseudomonas palustris (strain HaA2).